A 768-amino-acid chain; its full sequence is Putative calcium up-regulated protein H (768 aa).

The segment at 1–22 (MINIEDISKSSNQSEEKQLKST) is disordered. 2 consecutive Ricin B-type lectin domains span residues 25 to 145 (KPKY…WTTF) and 116 to 248 (QGNG…WGIN).

The protein belongs to the cup family.

The protein localises to the cytoplasm. It is found in the membrane. Functionally, may play an important role in stabilizing and/or regulating the cell membrane during Ca(2+) stress or certain stages of development. This Dictyostelium discoideum (Social amoeba) protein is Putative calcium up-regulated protein H (cupH).